The sequence spans 215 residues: Pyrrolidone-carboxylate peptidase (215 aa).

Residues Glu80, Cys143, and His167 contribute to the active site.

The protein belongs to the peptidase C15 family. As to quaternary structure, homotetramer.

It is found in the cytoplasm. It catalyses the reaction Release of an N-terminal pyroglutamyl group from a polypeptide, the second amino acid generally not being Pro.. In terms of biological role, removes 5-oxoproline from various penultimate amino acid residues except L-proline. This is Pyrrolidone-carboxylate peptidase from Bacillus cereus (strain ATCC 14579 / DSM 31 / CCUG 7414 / JCM 2152 / NBRC 15305 / NCIMB 9373 / NCTC 2599 / NRRL B-3711).